The chain runs to 579 residues: MVSMSTTGNAHTENVQHRLTVETVEIAPNTTAIRCLDWDRDRFDIEFGLQNGTTYNSYLIRGEQTVLVDTSHQKFRQLYLETLKGLINPKAIDYIIVSHTEPDHSGLVEDVLQLAPRATVLASKIALQFLEGLVHDPFSKRIVKSGDRIDIGKGHEIEFVSAPNLHWPDTIFSYDRKTEVIYTCDAFGMHFCDNRTFDEDLEAIEADFRFYYDCLMGPNARSLLNAMKRMGDLGKIKIIANGHGPLLYHHLDVLTECYQSWSQRQAKSETTVGLFYVADYGYSNLLVQAIGEGIQKTGVAVEMIDLSTAEIQEIQELAGRAAGLIIGMPPTTSVAAQAGISSLLSVVKDKQAVGLFECFGGDDEPVDTIRRKFIDLGVKEAFPAIRIKDVPGASAYQLCTEAGTDLGQLLTRERNIKQIKSLDVNMEKALGRISNGLYIVTTKKGDVSSAMLASWVSQASLQPLGFTIAVAKDRAIDSLMQVGDRFVLNVLEEGNYQELKKQFLKRLHPGADRFAGVRTQTAKNGSPILTDALAYMECEIQSSLECSDHYILYCTVEDGRVSKPDGLTAVRHRKVGNYY.

A zinc metallo-hydrolase region spans residues 50 to 243 (QNGTTYNSYL…GKIKIIANGH (194 aa)). Residues His-99, Glu-101, Asp-103, His-166, Asp-185, and His-243 each coordinate Fe cation. The 189-residue stretch at 272-460 (VGLFYVADYG…MLASWVSQAS (189 aa)) folds into the Flavodoxin-like domain. Residues 461-579 (LQPLGFTIAV…VRHRKVGNYY (119 aa)) are flavodoxin-reductase-like.

This sequence in the N-terminal section; belongs to the zinc metallo-hydrolase group 3 family. In the C-terminal section; belongs to the flavodoxin reductase family. The cofactor is Fe cation.

Mediates electron transfer from NADH to oxygen, reducing it to water. This modular protein has 3 redox cofactors, in other organisms the same activity requires 2 or 3 proteins. This Nostoc sp. (strain PCC 7120 / SAG 25.82 / UTEX 2576) protein is Putative diflavin flavoprotein A 2 (dfa2).